Consider the following 477-residue polypeptide: Bifunctional protein HldE (477 aa).

Positions 1 to 318 are ribokinase; sequence MKVTLPEFER…ENAVRGRADT (318 aa). Residue Lys179 is modified to N6-acetyllysine. An ATP-binding site is contributed by 195-198; sequence NLSE. Residue Asp264 is part of the active site. Positions 344 to 477 are cytidylyltransferase; it reads MTNGVFDILH…IKKIQQDKKG (134 aa).

It in the N-terminal section; belongs to the carbohydrate kinase PfkB family. In the C-terminal section; belongs to the cytidylyltransferase family. As to quaternary structure, homodimer.

The enzyme catalyses D-glycero-beta-D-manno-heptose 7-phosphate + ATP = D-glycero-beta-D-manno-heptose 1,7-bisphosphate + ADP + H(+). The catalysed reaction is D-glycero-beta-D-manno-heptose 1-phosphate + ATP + H(+) = ADP-D-glycero-beta-D-manno-heptose + diphosphate. The protein operates within nucleotide-sugar biosynthesis; ADP-L-glycero-beta-D-manno-heptose biosynthesis; ADP-L-glycero-beta-D-manno-heptose from D-glycero-beta-D-manno-heptose 7-phosphate: step 1/4. It functions in the pathway nucleotide-sugar biosynthesis; ADP-L-glycero-beta-D-manno-heptose biosynthesis; ADP-L-glycero-beta-D-manno-heptose from D-glycero-beta-D-manno-heptose 7-phosphate: step 3/4. Its function is as follows. Catalyzes the phosphorylation of D-glycero-D-manno-heptose 7-phosphate at the C-1 position to selectively form D-glycero-beta-D-manno-heptose-1,7-bisphosphate. Catalyzes the ADP transfer from ATP to D-glycero-beta-D-manno-heptose 1-phosphate, yielding ADP-D-glycero-beta-D-manno-heptose. The chain is Bifunctional protein HldE from Shigella flexneri serotype 5b (strain 8401).